The following is a 326-amino-acid chain: Protein MICROTUBULE BINDING PROTEIN 2C (326 aa).

Polar residues-rich tracts occupy residues 1–15 (MYEQ…QSDS) and 34–46 (PHQS…SGNE). Disordered stretches follow at residues 1 to 46 (MYEQ…SGNE) and 71 to 132 (ERSS…KALA). A coiled-coil region spans residues 132–183 (AGAEKEEMSRLREQVNDLQTKLSEKEEVLKSMEMSKNQVNEIQEKLEATNRL).

This sequence belongs to the microtubule binding protein 2C family. In terms of assembly, interacts with STM. In terms of tissue distribution, expressed in seedlings, roots, flowers and developing ovules.

The protein resides in the cytoplasm. Its subcellular location is the cytoskeleton. In terms of biological role, prevents homeodomain proteins (e.g. STM) association to plasmodesmata and, consequently, cell-to-cell transport. Binds to RNA. Alters STM RNA binding capacity. Regulates cytoskeleton (e.g. actin) organization that determinates cell shape. Regulates stomata patterning and drought tolerance. Involved in restricting tobamovirus (e.g. oilseed rape mosaic virus) infectivity, probably by interfering with cell-to-cell virus movement. The sequence is that of Protein MICROTUBULE BINDING PROTEIN 2C from Arabidopsis thaliana (Mouse-ear cress).